The primary structure comprises 1376 residues: Phospholipid-transporting ATPase DRS2 (1376 aa).

The segment covering 1-10 has biased composition (gly residues); that stretch reads MAGRPTGGPQ. Disordered regions lie at residues 1–151 and 180–217; these read MAGR…AAAR and GYSE…PKRD. The Cytoplasmic portion of the chain corresponds to 1-306; it reads MAGRPTGGPQ…QIPGLSPTNR (306 aa). Residues 40–50 show a composition bias toward basic and acidic residues; it reads DLMRTYTRDQE. Residues 85 to 96 are compositionally biased toward low complexity; sequence QSSSSNNNNNNN. The span at 97-115 shows a compositional bias: polar residues; it reads VSAPYSRSGRQYSQTSDLG. Residues 191 to 203 are compositionally biased toward gly residues; it reads PGGGGGGAGGGGH. The helical transmembrane segment at 307 to 327 threads the bilayer; sequence FTTIIPLVAVLMVSAGKELVE. The Extracellular segment spans residues 328–509; it reads DYRRKQADAA…KVEKKLNTLV (182 aa). Residues Asn339, Asn433, and Asn490 are each glycosylated (N-linked (GlcNAc...) asparagine). The chain crosses the membrane as a helical span at residues 510–530; it reads LLLVGILMVLSIISTVGDLII. Topologically, residues 531–559 are cytoplasmic; it reads RRVEGDAISYLMLDQPDTAGKIAETFFKD. Residues 560-580 traverse the membrane as a helical segment; the sequence is MVTYWVLFSSLVPISLFVTVE. Residues 581 to 1107 are Extracellular-facing; the sequence is MVKYWHGILI…VFSGAVIYES (527 aa). The active-site 4-aspartylphosphate intermediate is the Asp625. ATP contacts are provided by Asp625, Lys626, and Thr627. Asp625 lines the Mg(2+) pocket. Residue Thr627 coordinates Mg(2+). Asn679 carries an N-linked (GlcNAc...) asparagine glycan. ATP is bound by residues Glu720 and Phe761. A glycan (N-linked (GlcNAc...) asparagine) is linked at Asn762. ATP contacts are provided by Ser763, Lys766, Lys784, Arg817, Thr818, Thr898, Gly899, Asp900, Arg991, and Lys997. Residue Asp1018 participates in Mg(2+) binding. Asn1021 and Asp1022 together coordinate ATP. Residue Asp1022 participates in Mg(2+) binding. Asn1083 carries an N-linked (GlcNAc...) asparagine glycan. The helical transmembrane segment at 1108–1128 threads the bilayer; that stretch reads WTLTFYNVFYTVLPPLALGIL. Over 1129-1165 the chain is Cytoplasmic; sequence DQFISARLLDRYPQLYSMGQQNQFFRMKVFIEWLLNA. The helical transmembrane segment at 1166-1186 threads the bilayer; that stretch reads VYHSIILYVFGELIWHGDLIL. Topologically, residues 1187–1190 are extracellular; it reads ENGQ. The chain crosses the membrane as a helical span at residues 1191–1211; that stretch reads IAGHWMWGTALYAPVLLTVLG. Residue Lys1212 coordinates a 1,2-diacyl-sn-glycero-3-phospho-(1D-myo-inositol 4-phosphate). Residues 1212-1224 are Cytoplasmic-facing; sequence KAGLVTSNWTKYH. A helical transmembrane segment spans residues 1225 to 1245; the sequence is VIAIPGSMAIWWIFIAVYGTV. Topologically, residues 1246-1257 are extracellular; the sequence is APMIPFSPEFHG. A helical membrane pass occupies residues 1258–1278; the sequence is IVPKLYSSPIFWLQSFALAIL. Residues 1279–1376 lie on the Cytoplasmic side of the membrane; it reads CLLRDFAWKY…TSSRPQGQGT (98 aa). A 1,2-diacyl-sn-glycero-3-phospho-(1D-myo-inositol 4-phosphate)-binding residues include Arg1282, Trp1286, Lys1287, Tyr1298, and His1299.

This sequence belongs to the cation transport ATPase (P-type) (TC 3.A.3) family. Type IV subfamily. The cofactor is Mg(2+).

The protein localises to the cell membrane. It is found in the golgi apparatus. It localises to the trans-Golgi network membrane. It catalyses the reaction ATP + H2O + phospholipidSide 1 = ADP + phosphate + phospholipidSide 2.. It carries out the reaction a 1,2-diacyl-sn-glycero-3-phospho-L-serine(out) + ATP + H2O = a 1,2-diacyl-sn-glycero-3-phospho-L-serine(in) + ADP + phosphate + H(+). The catalysed reaction is a 1,2-diacyl-sn-glycero-3-phosphoethanolamine(out) + ATP + H2O = a 1,2-diacyl-sn-glycero-3-phosphoethanolamine(in) + ADP + phosphate + H(+). Its function is as follows. Catalytic component of a P4-ATPase flippase complex which catalyzes the hydrolysis of ATP coupled to the transport of phosphatidylserine and small amounts of ethanolamine from the lumen to the cytosolic leaflet of the trans-Golgi network and cell membrane and ensures the maintenance of asymmetric distribution of phospholipids. Required for efficient vesicle transport during toxin secretion. The protein is Phospholipid-transporting ATPase DRS2 (DRS2) of Verticillium dahliae (strain VdLs.17 / ATCC MYA-4575 / FGSC 10137) (Verticillium wilt).